The chain runs to 656 residues: Threonine--tRNA ligase (656 aa).

Residues 2–67 form the TGS domain; the sequence is LMSQITIILP…KDQTKVALVT (66 aa). The catalytic stretch occupies residues 251–542; it reads DHRKLGKELG…YLEHTAGHLP (292 aa). 3 residues coordinate Zn(2+): C342, H393, and H519.

It belongs to the class-II aminoacyl-tRNA synthetase family. Homodimer. Requires Zn(2+) as cofactor.

It is found in the cytoplasm. The catalysed reaction is tRNA(Thr) + L-threonine + ATP = L-threonyl-tRNA(Thr) + AMP + diphosphate + H(+). Catalyzes the attachment of threonine to tRNA(Thr) in a two-step reaction: L-threonine is first activated by ATP to form Thr-AMP and then transferred to the acceptor end of tRNA(Thr). Also edits incorrectly charged L-seryl-tRNA(Thr). This Bdellovibrio bacteriovorus (strain ATCC 15356 / DSM 50701 / NCIMB 9529 / HD100) protein is Threonine--tRNA ligase.